A 147-amino-acid chain; its full sequence is D-aminoacyl-tRNA deacylase (147 aa).

Positions 139-140 (GP) match the Gly-cisPro motif, important for rejection of L-amino acids motif.

It belongs to the DTD family. In terms of assembly, homodimer.

The protein localises to the cytoplasm. The catalysed reaction is glycyl-tRNA(Ala) + H2O = tRNA(Ala) + glycine + H(+). It carries out the reaction a D-aminoacyl-tRNA + H2O = a tRNA + a D-alpha-amino acid + H(+). Its function is as follows. An aminoacyl-tRNA editing enzyme that deacylates mischarged D-aminoacyl-tRNAs. Also deacylates mischarged glycyl-tRNA(Ala), protecting cells against glycine mischarging by AlaRS. Acts via tRNA-based rather than protein-based catalysis; rejects L-amino acids rather than detecting D-amino acids in the active site. By recycling D-aminoacyl-tRNA to D-amino acids and free tRNA molecules, this enzyme counteracts the toxicity associated with the formation of D-aminoacyl-tRNA entities in vivo and helps enforce protein L-homochirality. The sequence is that of D-aminoacyl-tRNA deacylase from Rippkaea orientalis (strain PCC 8801 / RF-1) (Cyanothece sp. (strain PCC 8801)).